A 640-amino-acid polypeptide reads, in one-letter code: Cytochrome P450 monooxygenase cyp1 (640 aa).

Asn71 carries N-linked (GlcNAc...) asparagine glycosylation. The helical transmembrane segment at 120-139 (LLVFLVGLFLGTIYLLYRYW) threads the bilayer. An N-linked (GlcNAc...) asparagine glycan is attached at Asn350. Cys572 serves as a coordination point for heme.

This sequence belongs to the cytochrome P450 family. It depends on heme as a cofactor.

The protein resides in the membrane. It functions in the pathway secondary metabolite biosynthesis. Cytochrome P450 monooxygenase; part of the gene cluster that mediates the biosynthesis of the glycolipid biosurfactant ustilagic acid (UA). UA is a secreted cellobiose glycolipid that is toxic for many microorganisms and confers biocontrol activity to U.maydis. UA consists of 15,16-dihydroxypalmitic or 2,15,16-trihydroxypalmitic acid, which is O-glycosidically linked to cellobiose at its terminal hydroxyl group. In addition, the cellobiose moiety is acetylated and acylated with a short-chain hydroxy fatty acid. UA biosynthesis starts with omega-hydroxylation of palmitic acid catalyzed by the cytochrome P450 monooxygenase cyp1. Terminal hydroxylation of palmitic acid precedes subterminal hydroxylation catalyzed by the cytochrome P450 monooxygenase cyp2. Sequential glucosylation of the hydroxy fatty acid is probably catalyzed by the glycosyltransferase ugt1. The cellobiose lipid is further decorated by acetylation of the proximal glucose residue and by acylation with a short-chain beta-hydroxy fatty acid at the distal glucose residue. The acyltransferase uat1 may be a good candidate for catalyzing either acetylation or acylation of the cellobiose lipid. The fatty acid synthase fas2 may be involved in synthesis of the carbon backbone of the short-chain beta-hydroxy fatty acid esterified to the cellobiose disaccharide. The secreted UA consists of a mixture of both alpha-hydroxylated and non-hydroxylated glycolipids; therefore, alpha-hydroxylation of the long-chain fatty, catalyzed by the fatty acid hydroxylase ahd1, occurs late in UA biosynthesis and may be the last step before secretion. The chain is Cytochrome P450 monooxygenase cyp1 from Mycosarcoma maydis (Corn smut fungus).